Here is a 139-residue protein sequence, read N- to C-terminus: D-ribose pyranase (139 aa).

Histidine 20 acts as the Proton donor in catalysis. Substrate is bound by residues aspartate 28, histidine 106, and 128–130 (YAN).

The protein belongs to the RbsD / FucU family. RbsD subfamily. In terms of assembly, homodecamer.

It localises to the cytoplasm. It carries out the reaction beta-D-ribopyranose = beta-D-ribofuranose. It functions in the pathway carbohydrate metabolism; D-ribose degradation; D-ribose 5-phosphate from beta-D-ribopyranose: step 1/2. Functionally, catalyzes the interconversion of beta-pyran and beta-furan forms of D-ribose. The polypeptide is D-ribose pyranase (Vibrio campbellii (strain ATCC BAA-1116)).